The sequence spans 93 residues: Small ribosomal subunit protein uS15 (93 aa).

The protein belongs to the universal ribosomal protein uS15 family. As to quaternary structure, part of the 30S ribosomal subunit. Forms a bridge to the 50S subunit in the 70S ribosome, contacting the 23S rRNA.

Its function is as follows. One of the primary rRNA binding proteins, it binds directly to 16S rRNA where it helps nucleate assembly of the platform of the 30S subunit by binding and bridging several RNA helices of the 16S rRNA. In terms of biological role, forms an intersubunit bridge (bridge B4) with the 23S rRNA of the 50S subunit in the ribosome. In Anaplasma phagocytophilum (strain HZ), this protein is Small ribosomal subunit protein uS15.